We begin with the raw amino-acid sequence, 182 residues long: Ribosome maturation factor RimM (182 aa).

Positions 103–182 (EDEFYWRELF…RIEVDWDPGF (80 aa)) constitute a PRC barrel domain.

This sequence belongs to the RimM family. In terms of assembly, binds ribosomal protein uS19.

Its subcellular location is the cytoplasm. In terms of biological role, an accessory protein needed during the final step in the assembly of 30S ribosomal subunit, possibly for assembly of the head region. Essential for efficient processing of 16S rRNA. May be needed both before and after RbfA during the maturation of 16S rRNA. It has affinity for free ribosomal 30S subunits but not for 70S ribosomes. This is Ribosome maturation factor RimM from Vibrio parahaemolyticus serotype O3:K6 (strain RIMD 2210633).